The following is a 165-amino-acid chain: Crossover junction endodeoxyribonuclease RuvC (165 aa).

Catalysis depends on residues Asp-7, Glu-68, and His-142. The Mg(2+) site is built by Asp-7, Glu-68, and His-142.

The protein belongs to the RuvC family. As to quaternary structure, homodimer which binds Holliday junction (HJ) DNA. The HJ becomes 2-fold symmetrical on binding to RuvC with unstacked arms; it has a different conformation from HJ DNA in complex with RuvA. In the full resolvosome a probable DNA-RuvA(4)-RuvB(12)-RuvC(2) complex forms which resolves the HJ. Mg(2+) is required as a cofactor.

Its subcellular location is the cytoplasm. The enzyme catalyses Endonucleolytic cleavage at a junction such as a reciprocal single-stranded crossover between two homologous DNA duplexes (Holliday junction).. Functionally, the RuvA-RuvB-RuvC complex processes Holliday junction (HJ) DNA during genetic recombination and DNA repair. Endonuclease that resolves HJ intermediates. Cleaves cruciform DNA by making single-stranded nicks across the HJ at symmetrical positions within the homologous arms, yielding a 5'-phosphate and a 3'-hydroxyl group; requires a central core of homology in the junction. The consensus cleavage sequence is 5'-(A/T)TT(C/G)-3'. Cleavage occurs on the 3'-side of the TT dinucleotide at the point of strand exchange. HJ branch migration catalyzed by RuvA-RuvB allows RuvC to scan DNA until it finds its consensus sequence, where it cleaves and resolves the cruciform DNA. The polypeptide is Crossover junction endodeoxyribonuclease RuvC (Anaplasma marginale (strain St. Maries)).